A 495-amino-acid chain; its full sequence is ATP-dependent RNA helicase dbp3 (495 aa).

Basic and acidic residues predominate over residues 1–14 (MAKRELQDKGSTEH). Residues 1–49 (MAKRELQDKGSTEHRAKKKSRNEKHTKKAEDSQASAQSSETQYTDPKEP) are disordered. Over residues 15–27 (RAKKKSRNEKHTK) the composition is skewed to basic residues. The Q motif signature appears at 97–105 (SFTSPTAIQ). Positions 109–284 (WPFLFSGRDV…ATFMTSPVTV (176 aa)) constitute a Helicase ATP-binding domain. 122–129 (AETGSGKT) contributes to the ATP binding site. Positions 231–234 (DEAD) match the DEAD box motif. The Helicase C-terminal domain occupies 315-464 (RLVQLLNKYQ…DVPEDLLKFG (150 aa)).

This sequence belongs to the DEAD box helicase family. DDX5/DBP2 subfamily.

It localises to the nucleus. The protein localises to the nucleolus. It catalyses the reaction ATP + H2O = ADP + phosphate + H(+). Functionally, ATP-dependent RNA helicase required for 60S ribosomal subunit synthesis. Involved in efficient pre-rRNA processing, predominantly at site A3, which is necessary for the normal formation of 25S and 5.8S rRNAs. This chain is ATP-dependent RNA helicase dbp3 (dbp3), found in Aspergillus niger (strain ATCC MYA-4892 / CBS 513.88 / FGSC A1513).